Here is a 589-residue protein sequence, read N- to C-terminus: ABC transporter G family member 8 (589 aa).

The 246-residue stretch at 16 to 261 (LTTSSISYTI…LLFKGFTVPP (246 aa)) folds into the ABC transporter domain. 62–69 (GPSGAGKS) contacts ATP. The ABC transmembrane type-2 domain maps to 311–521 (TEISLLARRF…ALDALLINEY (211 aa)). A run of 7 helical transmembrane segments spans residues 335–355 (ALEA…IGIG), 365–385 (MFAF…PIFI), 412–432 (VFLP…YFLI), 441–461 (FGYF…FVLF), 470–490 (ITGT…SGYF), 499–519 (YWLF…LLIN), and 560–580 (FNVY…FLAL).

This sequence belongs to the ABC transporter superfamily. ABCG family. Eye pigment precursor importer (TC 3.A.1.204) subfamily.

The protein resides in the membrane. The protein is ABC transporter G family member 8 (ABCG8) of Arabidopsis thaliana (Mouse-ear cress).